A 404-amino-acid chain; its full sequence is Argininosuccinate synthase (404 aa).

15–23 (AYSGGLDTS) lines the ATP pocket. Tyr-94 is a binding site for L-citrulline. Gly-124 lines the ATP pocket. Residues Thr-126, Asn-130, and Asp-131 each coordinate L-aspartate. Position 130 (Asn-130) interacts with L-citrulline. Residues Arg-134, Ser-182, Glu-266, and Tyr-278 each contribute to the L-citrulline site.

Belongs to the argininosuccinate synthase family. Type 1 subfamily. In terms of assembly, homotetramer.

It is found in the cytoplasm. The catalysed reaction is L-citrulline + L-aspartate + ATP = 2-(N(omega)-L-arginino)succinate + AMP + diphosphate + H(+). It participates in amino-acid biosynthesis; L-arginine biosynthesis; L-arginine from L-ornithine and carbamoyl phosphate: step 2/3. This chain is Argininosuccinate synthase, found in Streptomyces avermitilis (strain ATCC 31267 / DSM 46492 / JCM 5070 / NBRC 14893 / NCIMB 12804 / NRRL 8165 / MA-4680).